A 270-amino-acid chain; its full sequence is Formamidopyrimidine-DNA glycosylase (270 aa).

Residue proline 2 is the Schiff-base intermediate with DNA of the active site. Glutamate 3 (proton donor) is an active-site residue. Lysine 58 (proton donor; for beta-elimination activity) is an active-site residue. The DNA site is built by histidine 91, arginine 110, and arginine 151. The segment at 236–270 adopts an FPG-type zinc-finger fold; sequence FVYGRGGEFCKSCGSTLREIRLGQRASVYCSRCQR. Catalysis depends on arginine 260, which acts as the Proton donor; for delta-elimination activity.

It belongs to the FPG family. Monomer. Requires Zn(2+) as cofactor.

It catalyses the reaction Hydrolysis of DNA containing ring-opened 7-methylguanine residues, releasing 2,6-diamino-4-hydroxy-5-(N-methyl)formamidopyrimidine.. The enzyme catalyses 2'-deoxyribonucleotide-(2'-deoxyribose 5'-phosphate)-2'-deoxyribonucleotide-DNA = a 3'-end 2'-deoxyribonucleotide-(2,3-dehydro-2,3-deoxyribose 5'-phosphate)-DNA + a 5'-end 5'-phospho-2'-deoxyribonucleoside-DNA + H(+). Involved in base excision repair of DNA damaged by oxidation or by mutagenic agents. Acts as a DNA glycosylase that recognizes and removes damaged bases. Has a preference for oxidized purines, such as 7,8-dihydro-8-oxoguanine (8-oxoG). Has AP (apurinic/apyrimidinic) lyase activity and introduces nicks in the DNA strand. Cleaves the DNA backbone by beta-delta elimination to generate a single-strand break at the site of the removed base with both 3'- and 5'-phosphates. In Stutzerimonas stutzeri (strain A1501) (Pseudomonas stutzeri), this protein is Formamidopyrimidine-DNA glycosylase.